The following is a 401-amino-acid chain: 1-deoxy-D-xylulose 5-phosphate reductoisomerase (401 aa).

Positions 11, 12, 13, 14, 38, 39, and 125 each coordinate NADPH. Lys126 provides a ligand contact to 1-deoxy-D-xylulose 5-phosphate. Position 127 (Glu127) interacts with NADPH. Asp151 provides a ligand contact to Mn(2+). Residues Ser152, Glu153, Ser179, and His202 each contribute to the 1-deoxy-D-xylulose 5-phosphate site. Glu153 lines the Mn(2+) pocket. Gly208 serves as a coordination point for NADPH. 1-deoxy-D-xylulose 5-phosphate is bound by residues Ser215, Asn220, Lys221, and Glu224. Glu224 contributes to the Mn(2+) binding site.

It belongs to the DXR family. The cofactor is Mg(2+). It depends on Mn(2+) as a cofactor.

The enzyme catalyses 2-C-methyl-D-erythritol 4-phosphate + NADP(+) = 1-deoxy-D-xylulose 5-phosphate + NADPH + H(+). The protein operates within isoprenoid biosynthesis; isopentenyl diphosphate biosynthesis via DXP pathway; isopentenyl diphosphate from 1-deoxy-D-xylulose 5-phosphate: step 1/6. In terms of biological role, catalyzes the NADPH-dependent rearrangement and reduction of 1-deoxy-D-xylulose-5-phosphate (DXP) to 2-C-methyl-D-erythritol 4-phosphate (MEP). This is 1-deoxy-D-xylulose 5-phosphate reductoisomerase from Paraburkholderia xenovorans (strain LB400).